We begin with the raw amino-acid sequence, 552 residues long: L-ascorbate oxidase (552 aa).

Plastocyanin-like domains follow at residues Ser1–Asp122 and Asp134–Pro300. Cystine bridges form between Cys19–Cys201, Cys81–Cys538, and Cys180–Cys193. Cu cation-binding residues include His60 and His62. The N-linked (GlcNAc...) asparagine glycan is linked to Asn92. Residues His104 and His106 each contribute to the Cu cation site. Asn325 and Asn440 each carry an N-linked (GlcNAc...) asparagine glycan. In terms of domain architecture, Plastocyanin-like 3 spans Asn344 to Glu523. His445, His448, His450, His506, Cys507, His508, His512, and Met517 together coordinate Cu cation.

This sequence belongs to the multicopper oxidase family. In terms of assembly, dimer. The cofactor is Cu cation.

Its subcellular location is the secreted. The enzyme catalyses 4 L-ascorbate + O2 = 4 monodehydro-L-ascorbate radical + 2 H2O. May be involved in a redox system involving ascorbic acid. The sequence is that of L-ascorbate oxidase from Cucurbita pepo var. melopepo (Zucchini).